The chain runs to 206 residues: FMN-dependent NADH:quinone oxidoreductase 4 (206 aa).

FMN contacts are provided by residues serine 10 and 136 to 139 (SSGG).

It belongs to the azoreductase type 1 family. In terms of assembly, homodimer. FMN is required as a cofactor.

The catalysed reaction is 2 a quinone + NADH + H(+) = 2 a 1,4-benzosemiquinone + NAD(+). It catalyses the reaction N,N-dimethyl-1,4-phenylenediamine + anthranilate + 2 NAD(+) = 2-(4-dimethylaminophenyl)diazenylbenzoate + 2 NADH + 2 H(+). In terms of biological role, quinone reductase that provides resistance to thiol-specific stress caused by electrophilic quinones. Its function is as follows. Also exhibits azoreductase activity. Catalyzes the reductive cleavage of the azo bond in aromatic azo compounds to the corresponding amines. The sequence is that of FMN-dependent NADH:quinone oxidoreductase 4 from Pseudomonas fluorescens (strain ATCC BAA-477 / NRRL B-23932 / Pf-5).